Reading from the N-terminus, the 142-residue chain is Hemoglobin subunit alpha-2 (142 aa).

Residues 2-142 (LLSADDKKHI…VSTVLTSKYR (141 aa)) enclose the Globin domain. Histidine 59 provides a ligand contact to O2. Heme b is bound at residue histidine 88.

The protein belongs to the globin family. In terms of assembly, heterotetramer of two alpha chains and two beta chains. In terms of tissue distribution, red blood cells.

Its function is as follows. Involved in oxygen transport from the lung to the various peripheral tissues. The chain is Hemoglobin subunit alpha-2 (hba2) from Xenopus laevis (African clawed frog).